The sequence spans 129 residues: Ig lambda-1 chain V region S43 (129 aa).

An N-terminal signal peptide occupies residues 1–19 (MAWISLILSLLALSSGAIS). Pyrrolidone carboxylic acid is present on Gln-20. Residues 20–125 (QAVVTQESAL…HWVFGGGTKL (106 aa)) form the Ig-like domain.

This chain is Ig lambda-1 chain V region S43, found in Mus musculus (Mouse).